We begin with the raw amino-acid sequence, 389 residues long: S-adenosylmethionine synthase 3 (389 aa).

Glu9 serves as a coordination point for Mg(2+). ATP is bound at residue His15. Glu43 contacts K(+). Residues Glu56 and Gln99 each coordinate L-methionine. ATP is bound by residues 167–169 (DGK), 235–238 (SGRF), Asp246, 252–253 (RK), Ala269, Lys273, and Lys277. Asp246 provides a ligand contact to L-methionine. Position 277 (Lys277) interacts with L-methionine.

Belongs to the AdoMet synthase family. As to quaternary structure, homotetramer. It depends on Mn(2+) as a cofactor. Requires Mg(2+) as cofactor. Co(2+) serves as cofactor. The cofactor is K(+).

The protein localises to the cytoplasm. It carries out the reaction L-methionine + ATP + H2O = S-adenosyl-L-methionine + phosphate + diphosphate. Its pathway is amino-acid biosynthesis; S-adenosyl-L-methionine biosynthesis; S-adenosyl-L-methionine from L-methionine: step 1/1. Its function is as follows. Catalyzes the formation of S-adenosylmethionine from methionine and ATP. The reaction comprises two steps that are both catalyzed by the same enzyme: formation of S-adenosylmethionine (AdoMet) and triphosphate, and subsequent hydrolysis of the triphosphate. The polypeptide is S-adenosylmethionine synthase 3 (METK3) (Vitis vinifera (Grape)).